The chain runs to 498 residues: ADP,ATP carrier protein 1 (498 aa).

Topologically, residues 1-33 are cytoplasmic; it reads MSTTKSDNYISELRKVIWPIERYENKKFLPMAF. The chain crosses the membrane as a helical span at residues 34–54; that stretch reads MMFCILLNYSTLRSIKDGFVV. A disulfide bridge connects residues Cys37 and Cys85. Residues 55 to 67 lie on the Extracellular side of the membrane; that stretch reads TDIGAEAISFLKT. A helical membrane pass occupies residues 68-88; the sequence is YIVLPSAVIAMIVYVKLCDIL. The Cytoplasmic portion of the chain corresponds to 89 to 92; it reads KQEN. A helical transmembrane segment spans residues 93 to 113; sequence VFYVITSFFLAYFALFAFVLY. Residues 114 to 147 are Extracellular-facing; it reads PNPDLVHPNPEAIESLSLAYPNFKWFIRIVGKWS. The chain crosses the membrane as a helical span at residues 148 to 168; sequence FASFYTMAELWGTLMLSLLFW. Residues 169-184 are Cytoplasmic-facing; sequence QFANQITKTDEAKRFY. A helical transmembrane segment spans residues 185 to 205; it reads SMFGLLANLALPVTSLIIGYF. The Extracellular segment spans residues 206–218; the sequence is LHEKTQIVAEHLK. The helical transmembrane segment at 219–239 threads the bilayer; that stretch reads FTPLFVIMIISSLAVILTYRW. The Cytoplasmic segment spans residues 240–279; it reads MNKNVLTDPKLYDPALVKGKKAKAKMSLIESFKMIFTSKY. Residues 280–300 traverse the membrane as a helical segment; it reads VGYIALLLIAYGISVNLVEGV. The Extracellular segment spans residues 301 to 320; sequence WKSKLKELHPTKEAYTMYMG. A helical membrane pass occupies residues 321 to 341; that stretch reads QFQAYQGWVAIAFMIIGSNIL. Residues 342 to 348 lie on the Cytoplasmic side of the membrane; it reads RKVSWLT. Residues 349–369 traverse the membrane as a helical segment; it reads AAMITPLMMLITGIAFFAFIF. Residues 370 to 379 are Extracellular-facing; sequence FDSVIAMYLT. The chain crosses the membrane as a helical span at residues 380–400; that stretch reads GILASGPLALAVMIGTIQNVL. The Cytoplasmic portion of the chain corresponds to 401-438; it reads SKGVKYSLFDATKNMAYIPLDKDLRVKGQAAVEVIGGR. 436 to 442 provides a ligand contact to ATP; the sequence is GGRFGKS. Residues 439–459 form a helical membrane-spanning segment; the sequence is FGKSGGAIIQSTFFIIFPALG. Residues 460–465 lie on the Extracellular side of the membrane; sequence FVEATP. The chain crosses the membrane as a helical span at residues 466–486; it reads YFASIFFVIVILWIYAVKGLN. Residues 487-498 are Cytoplasmic-facing; it reads KEYQVLVNNTEK.

Belongs to the ADP/ATP translocase tlc family.

It is found in the cell membrane. Functionally, provides the rickettsial cell with host ATP in exchange for rickettsial ADP. This is an obligate exchange system. This energy acquiring activity is an important component of rickettsial parasitism. The sequence is that of ADP,ATP carrier protein 1 (tlcA) from Rickettsia bellii (strain RML369-C).